Here is a 176-residue protein sequence, read N- to C-terminus: Ribosome maturation factor RimM (176 aa).

The 74-residue stretch at 100 to 173 (EGEFHLLDLV…WLRLTPPPGL (74 aa)) folds into the PRC barrel domain.

Belongs to the RimM family. As to quaternary structure, binds ribosomal protein uS19.

It localises to the cytoplasm. In terms of biological role, an accessory protein needed during the final step in the assembly of 30S ribosomal subunit, possibly for assembly of the head region. Essential for efficient processing of 16S rRNA. May be needed both before and after RbfA during the maturation of 16S rRNA. It has affinity for free ribosomal 30S subunits but not for 70S ribosomes. This chain is Ribosome maturation factor RimM, found in Prochlorococcus marinus (strain MIT 9313).